We begin with the raw amino-acid sequence, 101 residues long: Glutenin, high molecular weight subunit PC256 (101 aa).

Residues 1–27 show a composition bias toward polar residues; the sequence is EKLGQGQQPRQWLQPRQGQQGYYPTSP. The tract at residues 1 to 65 is disordered; the sequence is EKLGQGQQPR…QGYDSPYHVS (65 aa). Over residues 41–62 the composition is skewed to low complexity; sequence QGYYPTSPQQSGQGQQGYDSPY.

It belongs to the gliadin/glutenin family. In terms of assembly, disulfide-bridge linked aggregates.

Its function is as follows. Glutenins are high-molecular weight seed storage proteins of wheat endosperm. Thought to be responsible for the visco-elastic property of wheat dough. The polypeptide is Glutenin, high molecular weight subunit PC256 (Triticum aestivum (Wheat)).